A 217-amino-acid polypeptide reads, in one-letter code: ATP phosphoribosyltransferase (217 aa).

The protein belongs to the ATP phosphoribosyltransferase family. Short subfamily. As to quaternary structure, heteromultimer composed of HisG and HisZ subunits.

It is found in the cytoplasm. It catalyses the reaction 1-(5-phospho-beta-D-ribosyl)-ATP + diphosphate = 5-phospho-alpha-D-ribose 1-diphosphate + ATP. It functions in the pathway amino-acid biosynthesis; L-histidine biosynthesis; L-histidine from 5-phospho-alpha-D-ribose 1-diphosphate: step 1/9. In terms of biological role, catalyzes the condensation of ATP and 5-phosphoribose 1-diphosphate to form N'-(5'-phosphoribosyl)-ATP (PR-ATP). Has a crucial role in the pathway because the rate of histidine biosynthesis seems to be controlled primarily by regulation of HisG enzymatic activity. The chain is ATP phosphoribosyltransferase from Burkholderia multivorans (strain ATCC 17616 / 249).